A 698-amino-acid polypeptide reads, in one-letter code: Endogenous retrovirus group K member 21 Env polyprotein (698 aa).

Residues 1–25 (MHPSEMQRKAPPRRRRHRNRAPLTH) are disordered. An N-terminal signal peptide occupies residues 1–88 (MHPSEMQRKA…ALMIVSMVVS (88 aa)). The segment covering 10–20 (APPRRRRHRNR) has biased composition (basic residues). The Extracellular portion of the chain corresponds to 89 to 631 (LPMPAGAAAA…NLNPVTWVKT (543 aa)). N-linked (GlcNAc...) asparagine glycans are attached at residues asparagine 99, asparagine 127, asparagine 152, asparagine 273, asparagine 354, asparagine 371, and asparagine 460. The interval 465–485 (FIFTLIAVIMGLIAVTAMAAV) is fusion peptide. Residues asparagine 506, asparagine 553, asparagine 565, and asparagine 584 are each glycosylated (N-linked (GlcNAc...) asparagine). A helical transmembrane segment spans residues 632 to 652 (IGSTTIINLILILVCLFCLLL). Over 653–698 (VCRCTQQLRRDSDHRERAMMTMVVLSKRKGGNVGKSKRDQIVTVSV) the chain is Cytoplasmic.

This sequence belongs to the beta type-B retroviral envelope protein family. HERV class-II K(HML-2) env subfamily. In terms of assembly, the surface (SU) and transmembrane (TM) proteins form a heterodimer. SU and TM are attached by noncovalent interactions or by a labile interchain disulfide bond. In terms of processing, specific enzymatic cleavages in vivo yield the mature SU and TM proteins.

The protein resides in the cell membrane. It localises to the virion. Its function is as follows. Retroviral envelope proteins mediate receptor recognition and membrane fusion during early infection. Endogenous envelope proteins may have kept, lost or modified their original function during evolution. This endogenous envelope protein has lost its original fusogenic properties. In terms of biological role, SU mediates receptor recognition. Functionally, TM anchors the envelope heterodimer to the viral membrane through one transmembrane domain. The other hydrophobic domain, called fusion peptide, mediates fusion of the viral membrane with the target cell membrane. This chain is Endogenous retrovirus group K member 21 Env polyprotein (ERVK-21), found in Homo sapiens (Human).